The following is a 147-amino-acid chain: Hemoglobin subunit beta (147 aa).

An N-acetylvaline modification is found at valine 2. A Globin domain is found at 3–147 (HLTGEEKAAV…VANALAHKYH (145 aa)). The residue at position 13 (threonine 13) is a Phosphothreonine. Position 45 is a phosphoserine (serine 45). Position 60 is an N6-acetyllysine (lysine 60). A heme b-binding site is contributed by histidine 64. Residue lysine 83 is modified to N6-acetyllysine. Histidine 93 provides a ligand contact to heme b. At cysteine 94 the chain carries S-nitrosocysteine. Residue lysine 145 is modified to N6-acetyllysine.

It belongs to the globin family. Heterotetramer of two alpha chains and two beta chains. As to expression, red blood cells.

Involved in oxygen transport from the lung to the various peripheral tissues. The polypeptide is Hemoglobin subunit beta (HBB) (Aotus azarae (Azara's night monkey)).